The sequence spans 363 residues: SWIRM domain-containing protein YOR338W (363 aa).

2 disordered regions span residues 1–22 (MLDN…GGIN) and 186–208 (LYED…VPVR). Basic and acidic residues predominate over residues 186 to 196 (LYEDDGNRSEN). The 98-residue stretch at 266–363 (LKVEWKGSPM…LQDKHFEKYL (98 aa)) folds into the SWIRM domain.

The polypeptide is SWIRM domain-containing protein YOR338W (Saccharomyces cerevisiae (strain ATCC 204508 / S288c) (Baker's yeast)).